Consider the following 544-residue polypeptide: MAKRIIYNENARRALEKGIDILAEAVAVTLGPKGRNVVLEKKFGAPQIINDGVTIAKEIELEDHIENTGVALIRQAASKTNDAAGDGTTTATVLAHAVVKEGLRNVAAGANAILLKRGIDKATNFLVEQIKSHARPVEDSKSIAQVGAISAGNDFEVGQMIADAMDKVGKEGVISLEEGKSMTTELEVTEGMRFDKGYISPYFATDTERMEAVFDEPFILITDKKIGLVQDLVPVLEQVARAGRPLVIIAEDIEKEALATLVVNRLRGVLNVAAVKAPGFGDRRKAMLEDIAVLTGGQLITEDAGLKLDTTKLDQLGKARRITITKDNTTIVAEGNEAAVKARVDQIRRQIEETESSYDKEKLQERLAKLSGGVAVVKVGAATETEMKDRKLRLEDAINATKAAVEEGIVPGGGTTLAHLAPQLEEWATANLSGEELTGAQIVARALTAPLKRIAENAGLNGAVISERVKELPFDEGYDASNNQFVNMFTAGIVDPAKVTRSALQNAASIAAMVLTTECIVVDKPEPKEKAPAGAGGGMGDFDY.

ATP-binding positions include 29–32 (TLGP), 86–90 (DGTTT), Gly413, and Asp495.

It belongs to the chaperonin (HSP60) family. Forms a cylinder of 14 subunits composed of two heptameric rings stacked back-to-back. Interacts with the co-chaperonin GroES.

Its subcellular location is the cytoplasm. The catalysed reaction is ATP + H2O + a folded polypeptide = ADP + phosphate + an unfolded polypeptide.. Functionally, together with its co-chaperonin GroES, plays an essential role in assisting protein folding. The GroEL-GroES system forms a nano-cage that allows encapsulation of the non-native substrate proteins and provides a physical environment optimized to promote and accelerate protein folding. In Synechococcus sp. (strain ATCC 27144 / PCC 6301 / SAUG 1402/1) (Anacystis nidulans), this protein is Chaperonin GroEL 1.